The chain runs to 221 residues: GTP-binding nuclear protein Ran/TC4 (221 aa).

The region spanning 10–174 (DYPSFKLVIV…LYLARKLAGD (165 aa)) is the Small GTPase Ran-type domain. 21 to 28 (DGGTGKTT) serves as a coordination point for GTP. The switch-I stretch occupies residues 40 to 48 (KKYEPTIGV). GTP contacts are provided by residues Gly71, 125–128 (NKVD), and 153–155 (SAK). The interval 71–87 (GQEKFGGLRDGYYIHGQ) is switch-II.

The protein belongs to the small GTPase superfamily. Ran family. Found in a nuclear export complex with RanGTP, exportin and pre-miRNA.

The protein localises to the nucleus. Functionally, GTP-binding protein involved in nucleocytoplasmic transport. Required for the import of protein into the nucleus and also for RNA export. Involved in chromatin condensation and control of cell cycle. This chain is GTP-binding nuclear protein Ran/TC4, found in Vicia faba (Broad bean).